The following is a 379-amino-acid chain: 1-deoxy-D-xylulose 5-phosphate reductoisomerase (379 aa).

NADPH is bound by residues T10, G11, S12, V13, and N121. 1-deoxy-D-xylulose 5-phosphate is bound at residue K122. E123 is a binding site for NADPH. D147 serves as a coordination point for Mn(2+). Positions 148, 149, 173, and 196 each coordinate 1-deoxy-D-xylulose 5-phosphate. E149 lines the Mn(2+) pocket. Position 202 (G202) interacts with NADPH. 1-deoxy-D-xylulose 5-phosphate is bound by residues S209, N214, K215, and E218. E218 is a Mn(2+) binding site.

Belongs to the DXR family. Mg(2+) serves as cofactor. It depends on Mn(2+) as a cofactor.

The enzyme catalyses 2-C-methyl-D-erythritol 4-phosphate + NADP(+) = 1-deoxy-D-xylulose 5-phosphate + NADPH + H(+). It participates in isoprenoid biosynthesis; isopentenyl diphosphate biosynthesis via DXP pathway; isopentenyl diphosphate from 1-deoxy-D-xylulose 5-phosphate: step 1/6. Catalyzes the NADPH-dependent rearrangement and reduction of 1-deoxy-D-xylulose-5-phosphate (DXP) to 2-C-methyl-D-erythritol 4-phosphate (MEP). This is 1-deoxy-D-xylulose 5-phosphate reductoisomerase from Chlamydia abortus (strain DSM 27085 / S26/3) (Chlamydophila abortus).